Reading from the N-terminus, the 278-residue chain is F-box only protein 17 (278 aa).

The region spanning 15 to 62 (SLALDALPPELLVQVLSHVPPRSLVTRCRPVCRAWRDIVDGPTVWLLQ) is the F-box domain. The 177-residue stretch at 99-275 (YCLRAPFGRN…VTHSSVRVRI (177 aa)) folds into the FBA domain.

Part of a SCF (SKP1-cullin-F-box) protein ligase complex. Interacts with SKP1 and CUL1. As to expression, expressed in heart, skeletal muscle, liver and kidney. Expressed at lower levels in spleen and brain.

Its function is as follows. Substrate-recognition component of the SCF (SKP1-CUL1-F-box protein)-type E3 ubiquitin ligase complex. Able to recognize and bind denatured glycoproteins, which are modified with complex-type oligosaccharides. Also recognizes sulfated glycans. Does not bind high-mannose glycoproteins. The protein is F-box only protein 17 (FBXO17) of Homo sapiens (Human).